A 343-amino-acid polypeptide reads, in one-letter code: L-threonine 3-dehydrogenase (343 aa).

Cys-38 is a Zn(2+) binding site. Active-site charge relay system residues include Thr-40 and His-43. 6 residues coordinate Zn(2+): His-63, Glu-64, Cys-93, Cys-96, Cys-99, and Cys-107. NAD(+)-binding positions include Ile-176, Asp-196, Arg-201, 261–263 (LGI), and 286–288 (IAG).

It belongs to the zinc-containing alcohol dehydrogenase family. As to quaternary structure, homotetramer. It depends on Zn(2+) as a cofactor.

The protein localises to the cytoplasm. It carries out the reaction L-threonine + NAD(+) = (2S)-2-amino-3-oxobutanoate + NADH + H(+). It participates in amino-acid degradation; L-threonine degradation via oxydo-reductase pathway; glycine from L-threonine: step 1/2. Catalyzes the NAD(+)-dependent oxidation of L-threonine to 2-amino-3-ketobutyrate. This is L-threonine 3-dehydrogenase from Thermus thermophilus (strain ATCC 27634 / DSM 579 / HB8).